Reading from the N-terminus, the 450-residue chain is Chromosomal replication initiator protein DnaA (450 aa).

The segment at 1–76 (MNLNDILKEL…KKILKQPVNI (76 aa)) is domain I, interacts with DnaA modulators. The interval 76-107 (ISFTYEQEYQKQLEKTESINKDHSDIISKKNK) is domain II. The tract at residues 108 to 327 (KVNENTFENF…GSVSRLNFWS (220 aa)) is domain III, AAA+ region. ATP is bound by residues Gly151, Gly153, Lys154, and Thr155. The segment at 328-450 (QQNPEEKVIT…DILKNKILTK (123 aa)) is domain IV, binds dsDNA.

It belongs to the DnaA family. Oligomerizes as a right-handed, spiral filament on DNA at oriC.

Its subcellular location is the cytoplasm. It is found in the cell membrane. Plays an essential role in the initiation and regulation of chromosomal replication. ATP-DnaA binds to the origin of replication (oriC) to initiate formation of the DNA replication initiation complex once per cell cycle. Binds the DnaA box (a 9 base pair repeat at the origin) and separates the double-stranded (ds)DNA. Forms a right-handed helical filament on oriC DNA; dsDNA binds to the exterior of the filament while single-stranded (ss)DNA is stabiized in the filament's interior. The ATP-DnaA-oriC complex binds and stabilizes one strand of the AT-rich DNA unwinding element (DUE), permitting loading of DNA polymerase. After initiation quickly degrades to an ADP-DnaA complex that is not apt for DNA replication. Binds acidic phospholipids. This Mycoplasma capricolum subsp. capricolum (strain California kid / ATCC 27343 / NCTC 10154) protein is Chromosomal replication initiator protein DnaA.